A 150-amino-acid chain; its full sequence is Urease accessory protein UreE (150 aa).

The protein belongs to the UreE family.

Its subcellular location is the cytoplasm. Its function is as follows. Involved in urease metallocenter assembly. Binds nickel. Probably functions as a nickel donor during metallocenter assembly. This chain is Urease accessory protein UreE, found in Staphylococcus carnosus (strain TM300).